Here is a 244-residue protein sequence, read N- to C-terminus: Thiol S-methyltransferase TMT1B (244 aa).

Positions 1 to 23 (MDALVLFLQLLVLLLTLPLHLLA) are cleaved as a signal peptide.

This sequence belongs to the methyltransferase superfamily.

Its subcellular location is the endoplasmic reticulum membrane. The protein resides in the lipid droplet. It is found in the microsome. It localises to the cytoplasm. The protein localises to the cytosol. It catalyses the reaction a thiol + S-adenosyl-L-methionine = a methyl thioether + S-adenosyl-L-homocysteine + H(+). Thiol S-methyltransferase that catalyzes the transfer of a methyl group from S-adenosyl-L-methionine to alkyl and phenolic thiol-containing acceptor substrates. Together with TMT1B accounts for most of S-thiol methylation activity in the endoplasmic reticulum of hepatocytes. Selectively methylates S-centered nucleophiles from metabolites such as hydrogen sulfide and dithiothreitol. This Mus musculus (Mouse) protein is Thiol S-methyltransferase TMT1B.